Reading from the N-terminus, the 407-residue chain is Putative glucose/galactose transporter (407 aa).

12 helical membrane passes run Gly11–Ile31, Leu47–Ile67, Ile70–Phe90, Phe96–Leu116, Val139–Phe159, Val180–Leu200, Phe225–Phe245, His263–Met283, Ile300–Phe320, Val321–Gly341, Gly349–Thr369, and Asn378–Leu398.

This sequence belongs to the major facilitator superfamily. FHS transporter (TC 2.A.1.7) family.

The protein resides in the cell inner membrane. In terms of biological role, intake of glucose and galactose. This chain is Putative glucose/galactose transporter (gluP), found in Helicobacter pylori (strain ATCC 700392 / 26695) (Campylobacter pylori).